The following is a 146-amino-acid chain: Large ribosomal subunit protein uL22 (146 aa).

This sequence belongs to the universal ribosomal protein uL22 family. Part of the 50S ribosomal subunit.

This protein binds specifically to 23S rRNA; its binding is stimulated by other ribosomal proteins, e.g. L4, L17, and L20. It is important during the early stages of 50S assembly. It makes multiple contacts with different domains of the 23S rRNA in the assembled 50S subunit and ribosome. Functionally, the globular domain of the protein is located near the polypeptide exit tunnel on the outside of the subunit, while an extended beta-hairpin is found that lines the wall of the exit tunnel in the center of the 70S ribosome. This chain is Large ribosomal subunit protein uL22, found in Nocardioides sp. (strain ATCC BAA-499 / JS614).